The sequence spans 376 residues: Chaperone protein DnaJ (376 aa).

The J domain maps to 5–70; it reads DYYEILGVSK…QKRAAYDQYG (66 aa). The segment at 131-209 adopts a CR-type zinc-finger fold; it reads GVTKEIRIPT…CHGHGRVERS (79 aa). The Zn(2+) site is built by Cys-144, Cys-147, Cys-161, Cys-164, Cys-183, Cys-186, Cys-197, and Cys-200. CXXCXGXG motif repeat units lie at residues 144–151, 161–168, 183–190, and 197–204; these read CDVCHGSG, CPTCHGSG, CPHCQGRG, and CNKCHGHG.

This sequence belongs to the DnaJ family. As to quaternary structure, homodimer. It depends on Zn(2+) as a cofactor.

It localises to the cytoplasm. Participates actively in the response to hyperosmotic and heat shock by preventing the aggregation of stress-denatured proteins and by disaggregating proteins, also in an autonomous, DnaK-independent fashion. Unfolded proteins bind initially to DnaJ; upon interaction with the DnaJ-bound protein, DnaK hydrolyzes its bound ATP, resulting in the formation of a stable complex. GrpE releases ADP from DnaK; ATP binding to DnaK triggers the release of the substrate protein, thus completing the reaction cycle. Several rounds of ATP-dependent interactions between DnaJ, DnaK and GrpE are required for fully efficient folding. Also involved, together with DnaK and GrpE, in the DNA replication of plasmids through activation of initiation proteins. This is Chaperone protein DnaJ from Escherichia fergusonii (strain ATCC 35469 / DSM 13698 / CCUG 18766 / IAM 14443 / JCM 21226 / LMG 7866 / NBRC 102419 / NCTC 12128 / CDC 0568-73).